We begin with the raw amino-acid sequence, 140 residues long: Small ribosomal subunit protein uS19 (140 aa).

Positions 55–74 (LAEARESGTEETANNPIRTH) are disordered.

It belongs to the universal ribosomal protein uS19 family.

Protein S19 forms a complex with S13 that binds strongly to the 16S ribosomal RNA. The polypeptide is Small ribosomal subunit protein uS19 (Halobacterium salinarum (strain ATCC 29341 / DSM 671 / R1)).